The following is a 371-amino-acid chain: Queuine tRNA-ribosyltransferase (371 aa).

Residue Asp90 is the Proton acceptor of the active site. Residues 90 to 94 (DSGGF), Asp144, Gln188, and Gly215 contribute to the substrate site. Residues 246–252 (GVGTPED) are RNA binding. The active-site Nucleophile is Asp265. The RNA binding; important for wobble base 34 recognition stretch occupies residues 270–274 (TRNAR). The Zn(2+) site is built by Cys303, Cys305, Cys308, and His334.

This sequence belongs to the queuine tRNA-ribosyltransferase family. In terms of assembly, homodimer. Within each dimer, one monomer is responsible for RNA recognition and catalysis, while the other monomer binds to the replacement base PreQ1. Requires Zn(2+) as cofactor.

It carries out the reaction 7-aminomethyl-7-carbaguanine + guanosine(34) in tRNA = 7-aminomethyl-7-carbaguanosine(34) in tRNA + guanine. It functions in the pathway tRNA modification; tRNA-queuosine biosynthesis. Functionally, catalyzes the base-exchange of a guanine (G) residue with the queuine precursor 7-aminomethyl-7-deazaguanine (PreQ1) at position 34 (anticodon wobble position) in tRNAs with GU(N) anticodons (tRNA-Asp, -Asn, -His and -Tyr). Catalysis occurs through a double-displacement mechanism. The nucleophile active site attacks the C1' of nucleotide 34 to detach the guanine base from the RNA, forming a covalent enzyme-RNA intermediate. The proton acceptor active site deprotonates the incoming PreQ1, allowing a nucleophilic attack on the C1' of the ribose to form the product. After dissociation, two additional enzymatic reactions on the tRNA convert PreQ1 to queuine (Q), resulting in the hypermodified nucleoside queuosine (7-(((4,5-cis-dihydroxy-2-cyclopenten-1-yl)amino)methyl)-7-deazaguanosine). The chain is Queuine tRNA-ribosyltransferase from Neisseria meningitidis serogroup C / serotype 2a (strain ATCC 700532 / DSM 15464 / FAM18).